The primary structure comprises 151 residues: SsrA-binding protein (151 aa).

The protein belongs to the SmpB family.

The protein resides in the cytoplasm. Required for rescue of stalled ribosomes mediated by trans-translation. Binds to transfer-messenger RNA (tmRNA), required for stable association of tmRNA with ribosomes. tmRNA and SmpB together mimic tRNA shape, replacing the anticodon stem-loop with SmpB. tmRNA is encoded by the ssrA gene; the 2 termini fold to resemble tRNA(Ala) and it encodes a 'tag peptide', a short internal open reading frame. During trans-translation Ala-aminoacylated tmRNA acts like a tRNA, entering the A-site of stalled ribosomes, displacing the stalled mRNA. The ribosome then switches to translate the ORF on the tmRNA; the nascent peptide is terminated with the 'tag peptide' encoded by the tmRNA and targeted for degradation. The ribosome is freed to recommence translation, which seems to be the essential function of trans-translation. This Flavobacterium johnsoniae (strain ATCC 17061 / DSM 2064 / JCM 8514 / BCRC 14874 / CCUG 350202 / NBRC 14942 / NCIMB 11054 / UW101) (Cytophaga johnsonae) protein is SsrA-binding protein.